The chain runs to 155 residues: 3-hydroxyacyl-[acyl-carrier-protein] dehydratase FabZ (155 aa).

His61 is a catalytic residue.

The protein belongs to the thioester dehydratase family. FabZ subfamily.

It localises to the cytoplasm. The catalysed reaction is a (3R)-hydroxyacyl-[ACP] = a (2E)-enoyl-[ACP] + H2O. Its function is as follows. Involved in unsaturated fatty acids biosynthesis. Catalyzes the dehydration of short chain beta-hydroxyacyl-ACPs and long chain saturated and unsaturated beta-hydroxyacyl-ACPs. This chain is 3-hydroxyacyl-[acyl-carrier-protein] dehydratase FabZ, found in Synechococcus elongatus (strain ATCC 33912 / PCC 7942 / FACHB-805) (Anacystis nidulans R2).